The following is a 350-amino-acid chain: UDP-glucose 4-epimerase GEPI48 (350 aa).

An NAD(+)-binding site is contributed by 5-36 (TVLVTGGAGYIGSHTVLQLLLGGFKAVVVDNL). S130 serves as a coordination point for substrate. The Proton acceptor role is filled by Y154.

It belongs to the NAD(P)-dependent epimerase/dehydratase family. NAD(+) serves as cofactor.

It carries out the reaction UDP-alpha-D-glucose = UDP-alpha-D-galactose. The protein operates within carbohydrate metabolism; galactose metabolism. The polypeptide is UDP-glucose 4-epimerase GEPI48 (Cyamopsis tetragonoloba (Guar)).